The chain runs to 152 residues: Ubiquitin-conjugating enzyme E2 2 (152 aa).

A UBC core domain is found at 4-150 (PARKRLMRDF…VREVVEQSWT (147 aa)). The active-site Glycyl thioester intermediate is Cys-88.

The protein belongs to the ubiquitin-conjugating enzyme family.

The catalysed reaction is S-ubiquitinyl-[E1 ubiquitin-activating enzyme]-L-cysteine + [E2 ubiquitin-conjugating enzyme]-L-cysteine = [E1 ubiquitin-activating enzyme]-L-cysteine + S-ubiquitinyl-[E2 ubiquitin-conjugating enzyme]-L-cysteine.. It functions in the pathway protein modification; protein ubiquitination. In terms of biological role, catalyzes the covalent attachment of ubiquitin to other proteins. The protein is Ubiquitin-conjugating enzyme E2 2 (UBC2) of Triticum aestivum (Wheat).